Reading from the N-terminus, the 491-residue chain is Probable malate:quinone oxidoreductase (491 aa).

It belongs to the MQO family. It depends on FAD as a cofactor.

It carries out the reaction (S)-malate + a quinone = a quinol + oxaloacetate. It functions in the pathway carbohydrate metabolism; tricarboxylic acid cycle; oxaloacetate from (S)-malate (quinone route): step 1/1. The chain is Probable malate:quinone oxidoreductase from Leifsonia xyli subsp. xyli (strain CTCB07).